Reading from the N-terminus, the 261-residue chain is MSESLHLTRNGPILEITLDRPKANAIDAKTSFAMGEAFLNFRDDPELRVAIITGGGEKFFSAGWDLKAAAEGEAPDADFGPGGFAGLTEIFDLDKPVIAAVNGYAFGGGFELALAADFIVCAENASFALPEAKLGIVPDSGGVLRLPKLLPPAIVNEMVMTGRRMSAEEALRWGVVNRVVSQSELMESARELAQQLVNSAPLAIAALKEIYRATSEMPVEEGYRYIRSGVLKHYPSVLHSEDALEGPQAFAEKRDPVWKGR.

Glu111 serves as the catalytic Nucleophile. Catalysis depends on Glu131, which acts as the Proton acceptor.

The protein belongs to the enoyl-CoA hydratase/isomerase family.

The enzyme catalyses (R)-carnitinyl-CoA = crotonobetainyl-CoA + H2O. The protein operates within amine and polyamine metabolism; carnitine metabolism. Catalyzes the reversible dehydration of L-carnitinyl-CoA to crotonobetainyl-CoA. This is Carnitinyl-CoA dehydratase from Salmonella typhimurium (strain LT2 / SGSC1412 / ATCC 700720).